The primary structure comprises 542 residues: Beta-fructofuranosidase, insoluble isoenzyme 5 (542 aa).

Substrate-binding positions include Trp-50–Asp-53, Gln-69, Trp-77, and Trp-114–Ser-115. Asp-53 is an active-site residue. N-linked (GlcNAc...) asparagine glycosylation occurs at Asn-142. Substrate is bound by residues Arg-178 to Asp-179 and Glu-233. A disulfide bridge connects residues Cys-389 and Cys-436. N-linked (GlcNAc...) asparagine glycosylation is found at Asn-510 and Asn-516.

The protein belongs to the glycosyl hydrolase 32 family. In terms of tissue distribution, expressed in roots and leaves.

It localises to the secreted. The protein resides in the extracellular space. The protein localises to the apoplast. Its subcellular location is the cell wall. It catalyses the reaction Hydrolysis of terminal non-reducing beta-D-fructofuranoside residues in beta-D-fructofuranosides.. May play a role in stress response. The sequence is that of Beta-fructofuranosidase, insoluble isoenzyme 5 (CIN5) from Oryza sativa subsp. japonica (Rice).